The following is a 443-amino-acid chain: Protein PRRC1 (443 aa).

Disordered stretches follow at residues 1–108 (MMEE…LSHF) and 139–206 (ITRG…QDDA). Residues 34–46 (VTSSFSSPNTSGM) show a composition bias toward polar residues. A compositionally biased stretch (pro residues) spans 59-80 (PSLPPVQPSAPPPFVPLSPAPS). The span at 81–96 (TPLSGTSVPPSVSPSP) shows a compositional bias: low complexity. Positions 169–188 (ITQQASMTSLAQGPGTTSAI) are enriched in polar residues.

Belongs to the PRRC1 family. As to quaternary structure, interacts with PRKAR1A; resulting in PKA activation.

The protein localises to the golgi apparatus. It localises to the cytoplasm. In terms of biological role, may act as a regulator of the protein kinase A (PKA) during embryonic development. This chain is Protein PRRC1 (Prrc1), found in Rattus norvegicus (Rat).